Reading from the N-terminus, the 162-residue chain is UPF0262 protein Acry_0160 (162 aa).

The protein belongs to the UPF0262 family.

The polypeptide is UPF0262 protein Acry_0160 (Acidiphilium cryptum (strain JF-5)).